We begin with the raw amino-acid sequence, 701 residues long: Polyribonucleotide nucleotidyltransferase (701 aa).

Residues aspartate 485 and aspartate 491 each coordinate Mg(2+). One can recognise a KH domain in the interval 552-611; that stretch reads PKTQIMSINPDKIRDVIGAGGKVINKIIQDTGVKIDIKEDGTVFVSSTDHNGVNEAIKII. In terms of domain architecture, S1 motif spans 621-689; that stretch reads GEVYLGKVTK…NQGRINLSRK (69 aa).

This sequence belongs to the polyribonucleotide nucleotidyltransferase family. It depends on Mg(2+) as a cofactor.

It is found in the cytoplasm. The catalysed reaction is RNA(n+1) + phosphate = RNA(n) + a ribonucleoside 5'-diphosphate. Functionally, involved in mRNA degradation. Catalyzes the phosphorolysis of single-stranded polyribonucleotides processively in the 3'- to 5'-direction. The protein is Polyribonucleotide nucleotidyltransferase of Clostridium beijerinckii (strain ATCC 51743 / NCIMB 8052) (Clostridium acetobutylicum).